The following is a 502-amino-acid chain: TNF receptor-associated factor family protein DDB_G0268444 (502 aa).

The segment at 28–68 (CSICYESVYKKEIYQCKEIHWFCKTCWAESLFKKKECMICR) adopts an RING-type; degenerate zinc-finger fold. 2 consecutive TRAF-type zinc fingers follow at residues 129–183 (KHLK…SRSL) and 185–243 (NHYK…PKSN). The stretch at 261 to 295 (IESQSLQIKETNIKYENLLNKINKLEQLETESKCD) forms a coiled coil. An MATH domain is found at 368-489 (KYKNRWSISN…DDSLVIDFSI (122 aa)).

It belongs to the TNF receptor-associated factor family. A subfamily.

The protein localises to the cytoplasm. Functionally, probable adapter protein and signal transducer that links members of the tumor necrosis factor receptor family to different signaling pathways by association with the receptor cytoplasmic domain and kinases. The protein is TNF receptor-associated factor family protein DDB_G0268444 of Dictyostelium discoideum (Social amoeba).